Consider the following 105-residue polypeptide: Integration host factor subunit alpha (105 aa).

It belongs to the bacterial histone-like protein family. In terms of assembly, heterodimer of an alpha and a beta chain.

Its function is as follows. This protein is one of the two subunits of integration host factor, a specific DNA-binding protein that functions in genetic recombination as well as in transcriptional and translational control. The chain is Integration host factor subunit alpha from Azorhizobium caulinodans (strain ATCC 43989 / DSM 5975 / JCM 20966 / LMG 6465 / NBRC 14845 / NCIMB 13405 / ORS 571).